Consider the following 123-residue polypeptide: Small ribosomal subunit protein uS12 (123 aa).

The tract at residues 1–32 (MPTINQLVRHGRKRSVKKTNTPALKASPQKRG) is disordered. D89 carries the 3-methylthioaspartic acid modification.

This sequence belongs to the universal ribosomal protein uS12 family. In terms of assembly, part of the 30S ribosomal subunit. Contacts proteins S8 and S17. May interact with IF1 in the 30S initiation complex.

In terms of biological role, with S4 and S5 plays an important role in translational accuracy. Interacts with and stabilizes bases of the 16S rRNA that are involved in tRNA selection in the A site and with the mRNA backbone. Located at the interface of the 30S and 50S subunits, it traverses the body of the 30S subunit contacting proteins on the other side and probably holding the rRNA structure together. The combined cluster of proteins S8, S12 and S17 appears to hold together the shoulder and platform of the 30S subunit. The protein is Small ribosomal subunit protein uS12 of Desulfatibacillum aliphaticivorans.